A 180-amino-acid chain; its full sequence is Centromere protein M (180 aa).

In terms of assembly, component of the CENPA-NAC complex, at least composed of CENPA, CENPC, CENPH, CENPM, CENPN, CENPT and CENPU. The CENPA-NAC complex interacts with the CENPA-CAD complex, composed of CENPI, CENPK, CENPL, CENPO, CENPP, CENPQ, CENPR and CENPS. As to expression, isoform 3 is highly expressed in spleen, and intermediately in heart, prostate and ovary. Isoform 3 is highly expressed in resting CD19 B-cells and B-lineage chronic lymphocytic leukemia (B-CLL) cells and weakly expressed in activated B-cells. Isoform 1 is selectively expressed in activated CD19 cells and weakly in resting CD19 B-cells.

The protein resides in the nucleus. Its subcellular location is the cytoplasm. It localises to the chromosome. The protein localises to the centromere. It is found in the kinetochore. Functionally, component of the CENPA-NAC (nucleosome-associated) complex, a complex that plays a central role in assembly of kinetochore proteins, mitotic progression and chromosome segregation. The CENPA-NAC complex recruits the CENPA-CAD (nucleosome distal) complex and may be involved in incorporation of newly synthesized CENPA into centromeres. This is Centromere protein M (CENPM) from Homo sapiens (Human).